The primary structure comprises 350 residues: Protein RecA (350 aa).

65–72 (GPESSGKT) lines the ATP pocket. A disordered region spans residues 326–350 (HNLKTRNTADSKVTGAKDEKSKEEK). The segment covering 340–350 (GAKDEKSKEEK) has biased composition (basic and acidic residues).

The protein belongs to the RecA family.

Its subcellular location is the cytoplasm. Can catalyze the hydrolysis of ATP in the presence of single-stranded DNA, the ATP-dependent uptake of single-stranded DNA by duplex DNA, and the ATP-dependent hybridization of homologous single-stranded DNAs. It interacts with LexA causing its activation and leading to its autocatalytic cleavage. The chain is Protein RecA from Clostridium novyi (strain NT).